A 284-amino-acid chain; its full sequence is 2-dehydro-3-deoxyphosphooctonate aldolase (284 aa).

The protein belongs to the KdsA family.

Its subcellular location is the cytoplasm. The catalysed reaction is D-arabinose 5-phosphate + phosphoenolpyruvate + H2O = 3-deoxy-alpha-D-manno-2-octulosonate-8-phosphate + phosphate. It functions in the pathway carbohydrate biosynthesis; 3-deoxy-D-manno-octulosonate biosynthesis; 3-deoxy-D-manno-octulosonate from D-ribulose 5-phosphate: step 2/3. It participates in bacterial outer membrane biogenesis; lipopolysaccharide biosynthesis. This Methylobacterium radiotolerans (strain ATCC 27329 / DSM 1819 / JCM 2831 / NBRC 15690 / NCIMB 10815 / 0-1) protein is 2-dehydro-3-deoxyphosphooctonate aldolase.